Consider the following 61-residue polypeptide: Small ribosomal subunit protein uS14 (61 aa).

Zn(2+) is bound by residues C24, C27, C40, and C43.

It belongs to the universal ribosomal protein uS14 family. Zinc-binding uS14 subfamily. In terms of assembly, part of the 30S ribosomal subunit. Contacts proteins S3 and S10. The cofactor is Zn(2+).

Binds 16S rRNA, required for the assembly of 30S particles and may also be responsible for determining the conformation of the 16S rRNA at the A site. This chain is Small ribosomal subunit protein uS14, found in Clostridium novyi (strain NT).